The chain runs to 212 residues: Thiamine-phosphate synthase (212 aa).

4-amino-2-methyl-5-(diphosphooxymethyl)pyrimidine-binding positions include 39-41 (QLR) and asparagine 71. Residues aspartate 72 and aspartate 91 each coordinate Mg(2+). A 4-amino-2-methyl-5-(diphosphooxymethyl)pyrimidine-binding site is contributed by serine 110. 136 to 138 (TGT) contacts 2-[(2R,5Z)-2-carboxy-4-methylthiazol-5(2H)-ylidene]ethyl phosphate. A 4-amino-2-methyl-5-(diphosphooxymethyl)pyrimidine-binding site is contributed by lysine 139. 2-[(2R,5Z)-2-carboxy-4-methylthiazol-5(2H)-ylidene]ethyl phosphate contacts are provided by residues glycine 167 and 187–188 (VS).

It belongs to the thiamine-phosphate synthase family. It depends on Mg(2+) as a cofactor.

It catalyses the reaction 2-[(2R,5Z)-2-carboxy-4-methylthiazol-5(2H)-ylidene]ethyl phosphate + 4-amino-2-methyl-5-(diphosphooxymethyl)pyrimidine + 2 H(+) = thiamine phosphate + CO2 + diphosphate. The enzyme catalyses 2-(2-carboxy-4-methylthiazol-5-yl)ethyl phosphate + 4-amino-2-methyl-5-(diphosphooxymethyl)pyrimidine + 2 H(+) = thiamine phosphate + CO2 + diphosphate. The catalysed reaction is 4-methyl-5-(2-phosphooxyethyl)-thiazole + 4-amino-2-methyl-5-(diphosphooxymethyl)pyrimidine + H(+) = thiamine phosphate + diphosphate. It functions in the pathway cofactor biosynthesis; thiamine diphosphate biosynthesis; thiamine phosphate from 4-amino-2-methyl-5-diphosphomethylpyrimidine and 4-methyl-5-(2-phosphoethyl)-thiazole: step 1/1. Its function is as follows. Condenses 4-methyl-5-(beta-hydroxyethyl)thiazole monophosphate (THZ-P) and 2-methyl-4-amino-5-hydroxymethyl pyrimidine pyrophosphate (HMP-PP) to form thiamine monophosphate (TMP). This Azorhizobium caulinodans (strain ATCC 43989 / DSM 5975 / JCM 20966 / LMG 6465 / NBRC 14845 / NCIMB 13405 / ORS 571) protein is Thiamine-phosphate synthase.